Reading from the N-terminus, the 73-residue chain is Small ribosomal subunit protein bS18 (73 aa).

It belongs to the bacterial ribosomal protein bS18 family. In terms of assembly, part of the 30S ribosomal subunit. Forms a tight heterodimer with protein bS6.

Binds as a heterodimer with protein bS6 to the central domain of the 16S rRNA, where it helps stabilize the platform of the 30S subunit. This chain is Small ribosomal subunit protein bS18, found in Coxiella burnetii (strain Dugway 5J108-111).